The chain runs to 151 residues: Putative transcriptional regulatory protein TK2151 (151 aa).

It belongs to the Tfx family.

Functionally, putative transcriptional regulator. This is Putative transcriptional regulatory protein TK2151 from Thermococcus kodakarensis (strain ATCC BAA-918 / JCM 12380 / KOD1) (Pyrococcus kodakaraensis (strain KOD1)).